Reading from the N-terminus, the 271-residue chain is Large ribosomal subunit protein uL3c (271 aa).

Residues 1–49 constitute a chloroplast transit peptide; it reads MAIAMAVVSFPSLLNKTTLSSSLFTPTFLPAKSSSLLIKSSPKTRFVVS. The interval 190 to 222 is disordered; the sequence is HGSKSHRALGSIGAGTTPGRVYKGKKMPGRMGG.

This sequence belongs to the universal ribosomal protein uL3 family. As to quaternary structure, part of the 50S ribosomal subunit.

The protein localises to the plastid. It localises to the chloroplast. In terms of biological role, one of the primary rRNA binding proteins, it binds directly near the 3'-end of the 23S rRNA, where it nucleates assembly of the 50S subunit. The protein is Large ribosomal subunit protein uL3c (RPL3A) of Arabidopsis thaliana (Mouse-ear cress).